A 323-amino-acid polypeptide reads, in one-letter code: Aquaporin-4 (323 aa).

Residues 1-36 (MSDGAAARRWGKCGHSCSRESIMVAFKGVWTQAFWK) are Cytoplasmic-facing. 2 S-palmitoyl cysteine lipidation sites follow: Cys-13 and Cys-17. The helical transmembrane segment at 37-57 (AVSAEFLATLIFVLLGVGSTI) threads the bilayer. Residues 58–69 (NWGGSENPLPVD) are Extracellular-facing. A helical membrane pass occupies residues 70–89 (MVLISLCFGLSIATMVQCFG). The Cytoplasmic portion of the chain corresponds to 90 to 93 (HISG). The segment at residues 94–101 (GHINPAVT) is an intramembrane region (discontinuously helical). The short motif at 97–99 (NPA) is the NPA 1 element. Residues 102–115 (VAMVCTRKISIAKS) lie on the Cytoplasmic side of the membrane. Position 111 is a phosphoserine; by PKG (Ser-111). A helical transmembrane segment spans residues 116–136 (VFYIIAQCLGAIIGAGILYLV). Residues 137 to 155 (TPPSVVGGLGVTTVHGNLT) lie on the Extracellular side of the membrane. The N-linked (GlcNAc...) asparagine glycan is linked to Asn-153. A helical membrane pass occupies residues 156–176 (AGHGLLVELIITFQLVFTIFA). At 177 to 184 (SCDSKRTD) the chain is on the cytoplasmic side. Residue Ser-180 is modified to Phosphoserine; by PKC. Residues 185–205 (VTGSIALAIGFSVAIGHLFAI) form a helical membrane-spanning segment. Residue Asn-206 is glycosylated (N-linked (GlcNAc...) asparagine). Topologically, residues 206–208 (NYT) are extracellular. An intramembrane region (discontinuously helical) is located at residues 209-222 (GASMNPARSFGPAV). Positions 213–215 (NPA) match the NPA 2 motif. Topologically, residues 223–231 (IMGNWANHW) are extracellular. The chain crosses the membrane as a helical span at residues 232–252 (IYWVGPIMGAVLAGALYEYVF). At 253 to 323 (CPDVELKRRL…DSSGEVLSSV (71 aa)) the chain is on the cytoplasmic side. Ser-276 and Ser-285 each carry phosphoserine. Position 289 is a phosphothreonine (Thr-289). Ser-321 is subject to Phosphoserine.

This sequence belongs to the MIP/aquaporin (TC 1.A.8) family. Homotetramer. The tetramers can form oligomeric arrays in membranes. The size of the oligomers differs between tissues and is smaller in skeletal muscle than in brain. Interaction between AQP4 oligomeric arrays in close-by cells can contribute to cell-cell adhesion. Part of a complex containing MLC1, TRPV4, HEPACAM and ATP1B1. Post-translationally, phosphorylation by PKC at Ser-180 reduces conductance by 50%. Phosphorylation by PKG at Ser-111 in response to glutamate increases conductance by 40%; this increase is not due to increased presence at the cell membrane. In terms of processing, isoform 2: Palmitoylated on its N-terminal region. Isoform 1: Not palmitoylated. Detected in brain cortex, especially around cortical blood vessels, and subjacent to pia, with lower levels in parenchymal membranes. Detected in ependymal and astroglial cells in brain. Detected in supporting Hensen's cells, inner sulcus cells and Claudius cells in the inner ear. Detected in skeletal muscle. Detected in gastric parietal cells. Detected in principal cells in collecting ducts in kidney medulla (at protein level). Detected in brain, heart and skeletal muscle.

It is found in the cell membrane. The protein resides in the basolateral cell membrane. It localises to the endosome membrane. Its subcellular location is the sarcolemma. The protein localises to the cell projection. It carries out the reaction H2O(in) = H2O(out). Functionally, forms a water-specific channel. Plays an important role in brain water homeostasis and in glymphatic solute transport. Required for a normal rate of water exchange across the blood brain interface. Required for normal levels of cerebrospinal fluid influx into the brain cortex and parenchyma along paravascular spaces that surround penetrating arteries, and for normal drainage of interstitial fluid along paravenous drainage pathways. Thereby, it is required for normal clearance of solutes from the brain interstitial fluid, including soluble beta-amyloid peptides derived from APP. Plays a redundant role in urinary water homeostasis and urinary concentrating ability. The sequence is that of Aquaporin-4 (Aqp4) from Mus musculus (Mouse).